The sequence spans 598 residues: Elongation factor 4 (598 aa).

Residues 2-184 form the tr-type G domain; that stretch reads KNIRNFSIIA…EIVRKIPAPE (183 aa). Residues 14-19 and 131-134 contribute to the GTP site; these read DHGKST and NKID.

Belongs to the TRAFAC class translation factor GTPase superfamily. Classic translation factor GTPase family. LepA subfamily.

It is found in the cell inner membrane. The enzyme catalyses GTP + H2O = GDP + phosphate + H(+). Its function is as follows. Required for accurate and efficient protein synthesis under certain stress conditions. May act as a fidelity factor of the translation reaction, by catalyzing a one-codon backward translocation of tRNAs on improperly translocated ribosomes. Back-translocation proceeds from a post-translocation (POST) complex to a pre-translocation (PRE) complex, thus giving elongation factor G a second chance to translocate the tRNAs correctly. Binds to ribosomes in a GTP-dependent manner. The polypeptide is Elongation factor 4 (Histophilus somni (strain 2336) (Haemophilus somnus)).